The following is a 146-amino-acid chain: ATP synthase epsilon chain (146 aa).

Residues 103–124 form a disordered region; sequence QAERELGQLPEEEDEDSRRARE.

It belongs to the ATPase epsilon chain family. As to quaternary structure, F-type ATPases have 2 components, CF(1) - the catalytic core - and CF(0) - the membrane proton channel. CF(1) has five subunits: alpha(3), beta(3), gamma(1), delta(1), epsilon(1). CF(0) has three main subunits: a, b and c.

It is found in the cell membrane. Produces ATP from ADP in the presence of a proton gradient across the membrane. The sequence is that of ATP synthase epsilon chain from Rubrobacter xylanophilus (strain DSM 9941 / JCM 11954 / NBRC 16129 / PRD-1).